The primary structure comprises 453 residues: Allantoinase (453 aa).

Zn(2+) contacts are provided by His59, His61, Lys146, His186, His242, and Asp315. Position 146 is an N6-carboxylysine (Lys146).

The protein belongs to the metallo-dependent hydrolases superfamily. Allantoinase family. In terms of assembly, homotetramer. Zn(2+) serves as cofactor. Post-translationally, carboxylation allows a single lysine to coordinate two zinc ions.

It catalyses the reaction (S)-allantoin + H2O = allantoate + H(+). Its pathway is nitrogen metabolism; (S)-allantoin degradation; allantoate from (S)-allantoin: step 1/1. Its function is as follows. Catalyzes the conversion of allantoin (5-ureidohydantoin) to allantoic acid by hydrolytic cleavage of the five-member hydantoin ring. This chain is Allantoinase, found in Escherichia coli (strain K12 / MC4100 / BW2952).